Here is a 50-residue protein sequence, read N- to C-terminus: Basic phospholipase A2 Bmaj-9 (50 aa).

3 residues coordinate Ca(2+): Tyr27, Gly29, and Gly31. Cys28 and Cys45 are oxidised to a cystine. The active site involves His48. Residue Asp49 coordinates Ca(2+).

This sequence belongs to the phospholipase A2 family. Group II subfamily. D49 sub-subfamily. Requires Ca(2+) as cofactor. As to expression, expressed by the venom gland.

Its subcellular location is the secreted. The catalysed reaction is a 1,2-diacyl-sn-glycero-3-phosphocholine + H2O = a 1-acyl-sn-glycero-3-phosphocholine + a fatty acid + H(+). In terms of biological role, snake venom phospholipase A2 (PLA2) that causes irreversible neuromuscular blockade in chick biventer cervicis muscle preparations. The neuromuscular blockade is mediated by inhibitory action at the presynaptic motor nerve endings. PLA2 catalyzes the calcium-dependent hydrolysis of the 2-acyl groups in 3-sn-phosphoglycerides. This chain is Basic phospholipase A2 Bmaj-9, found in Bothrops marajoensis (Marajo lancehead).